The following is a 353-amino-acid chain: Nicotinate-nucleotide--dimethylbenzimidazole phosphoribosyltransferase (353 aa).

Catalysis depends on Glu-318, which acts as the Proton acceptor.

Belongs to the CobT family.

It carries out the reaction 5,6-dimethylbenzimidazole + nicotinate beta-D-ribonucleotide = alpha-ribazole 5'-phosphate + nicotinate + H(+). It functions in the pathway nucleoside biosynthesis; alpha-ribazole biosynthesis; alpha-ribazole from 5,6-dimethylbenzimidazole: step 1/2. Functionally, catalyzes the synthesis of alpha-ribazole-5'-phosphate from nicotinate mononucleotide (NAMN) and 5,6-dimethylbenzimidazole (DMB). The polypeptide is Nicotinate-nucleotide--dimethylbenzimidazole phosphoribosyltransferase (Desulforudis audaxviator (strain MP104C)).